Consider the following 1162-residue polypeptide: Enhanced level of genomic instability 1 (1162 aa).

7 disordered regions span residues 1–136 (MTDV…ADNQ), 144–163 (KAGK…KPKP), 179–202 (LGVN…ATPT), 249–319 (KTDA…TKKR), 348–380 (METP…RRSC), 611–634 (RSME…PNGE), and 666–697 (WSGN…SSSN). The span at 65–78 (KQKHREKHKRKREE) shows a compositional bias: basic residues. Positions 79 to 111 (KRRAALMEDQKSTTEEVKANAKEKPQPLREKSS) are enriched in basic and acidic residues. Over residues 125 to 136 (PLKSSTPVADNQ) the composition is skewed to polar residues. Residues 268-278 (KRLRGRPRSRR) show a composition bias toward basic residues. Composition is skewed to low complexity over residues 666 to 676 (WSGNGGSNRNS) and 684 to 697 (DMSN…SSSN). Residue 703–710 (GPSSSGKT) participates in ATP binding. Disordered stretches follow at residues 900-923 (GDST…SRLA) and 975-1008 (QAAG…SDGH). Basic residues predominate over residues 984–993 (AAKRKSRSPK). The span at 998 to 1008 (SSATGQKSDGH) shows a compositional bias: polar residues.

It belongs to the ELG1 family. Component of a heteropentameric Elg1 RFC-like complex composed of one large subunit (elg1) and four small subunits (RfC4, RfC38, CG8142 and RfC3). As part of the complex, might interact with the Enok complex, composed of enok, Br140, Eaf6 and Ing5. Within the Enok complex, interacts directly with Br140. As to expression, expressed at higher levels in the germline nurse cells than in the somatic follicle cells.

It localises to the nucleus. Its function is as follows. Has an important role in DNA replication and in maintaining genome integrity during replication stress. Promotes PCNA deubiquitination. As component of the Elg1 RFC-like complex, regulates the functions of the DNA polymerase processivity factor PCNA by unloading it from DNA after replication during the S phase of the cell cycle. The PCNA-unloading might be regulated via interaction with the Enok acetyltransferase complex. Might have a role in restarting of stalled/regressed replication forks during replication stress. In the ovaries, has a role in nurse cell endoreplication. This Drosophila melanogaster (Fruit fly) protein is Enhanced level of genomic instability 1.